A 342-amino-acid polypeptide reads, in one-letter code: Putative anthocyanidin reductase (342 aa).

Residues arginine 44, lysine 51, 71–72 (EL), 91–93 (VAT), tyrosine 172, lysine 176, 199–202 (PVLV), and serine 214 each bind NADP(+). The Proton donor role is filled by lysine 176.

This sequence belongs to the NAD(P)-dependent epimerase/dehydratase family. Dihydroflavonol-4-reductase subfamily. Highly expressed in leaves and weakly in stems. Not expressed in roots.

It participates in secondary metabolite biosynthesis; flavonoid biosynthesis. The protein is Putative anthocyanidin reductase of Ginkgo biloba (Ginkgo).